Reading from the N-terminus, the 290-residue chain is 4-hydroxybenzoate octaprenyltransferase (290 aa).

Helical transmembrane passes span 21–41 (IGTL…VKGM), 44–64 (LSIL…GCVI), 84–104 (LATG…LVFC), 106–126 (FILV…AVFL), 142–162 (LFLG…SIEA), 212–232 (IISL…YLSQ), 235–255 (TSYF…CKLI), and 267–287 (FLNN…GIFF).

The protein belongs to the UbiA prenyltransferase family. Requires Mg(2+) as cofactor.

It localises to the cell inner membrane. It carries out the reaction all-trans-octaprenyl diphosphate + 4-hydroxybenzoate = 4-hydroxy-3-(all-trans-octaprenyl)benzoate + diphosphate. It functions in the pathway cofactor biosynthesis; ubiquinone biosynthesis. In terms of biological role, catalyzes the prenylation of para-hydroxybenzoate (PHB) with an all-trans polyprenyl group. Mediates the second step in the final reaction sequence of ubiquinone-8 (UQ-8) biosynthesis, which is the condensation of the polyisoprenoid side chain with PHB, generating the first membrane-bound Q intermediate 3-octaprenyl-4-hydroxybenzoate. This is 4-hydroxybenzoate octaprenyltransferase from Pasteurella multocida (strain Pm70).